Here is a 129-residue protein sequence, read N- to C-terminus: Phosphoribosyl-AMP cyclohydrolase (129 aa).

D76 is a binding site for Mg(2+). C77 contributes to the Zn(2+) binding site. Residues D78 and D80 each coordinate Mg(2+). Zn(2+) is bound by residues C97 and C104.

It belongs to the PRA-CH family. In terms of assembly, homodimer. Requires Mg(2+) as cofactor. It depends on Zn(2+) as a cofactor.

Its subcellular location is the cytoplasm. It catalyses the reaction 1-(5-phospho-beta-D-ribosyl)-5'-AMP + H2O = 1-(5-phospho-beta-D-ribosyl)-5-[(5-phospho-beta-D-ribosylamino)methylideneamino]imidazole-4-carboxamide. It functions in the pathway amino-acid biosynthesis; L-histidine biosynthesis; L-histidine from 5-phospho-alpha-D-ribose 1-diphosphate: step 3/9. Functionally, catalyzes the hydrolysis of the adenine ring of phosphoribosyl-AMP. This Polaromonas naphthalenivorans (strain CJ2) protein is Phosphoribosyl-AMP cyclohydrolase.